We begin with the raw amino-acid sequence, 485 residues long: Glycogen synthase (485 aa).

Position 20 (Lys20) interacts with ADP-alpha-D-glucose.

It belongs to the glycosyltransferase 1 family. Bacterial/plant glycogen synthase subfamily.

It catalyses the reaction [(1-&gt;4)-alpha-D-glucosyl](n) + ADP-alpha-D-glucose = [(1-&gt;4)-alpha-D-glucosyl](n+1) + ADP + H(+). Its pathway is glycan biosynthesis; glycogen biosynthesis. Its function is as follows. Synthesizes alpha-1,4-glucan chains using ADP-glucose. The polypeptide is Glycogen synthase (Vibrio parahaemolyticus serotype O3:K6 (strain RIMD 2210633)).